A 570-amino-acid polypeptide reads, in one-letter code: Methionine--tRNA ligase (570 aa).

Residues 14 to 24 carry the 'HIGH' region motif; that stretch reads PYINGIKHLGN. Zn(2+) contacts are provided by cysteine 146, cysteine 149, cysteine 159, and cysteine 162. Residues 347-351 carry the 'KMSKS' region motif; that stretch reads QFSTS. ATP is bound at residue threonine 350.

This sequence belongs to the class-I aminoacyl-tRNA synthetase family. MetG type 1 subfamily. Monomer. Requires Zn(2+) as cofactor.

Its subcellular location is the cytoplasm. The catalysed reaction is tRNA(Met) + L-methionine + ATP = L-methionyl-tRNA(Met) + AMP + diphosphate. In terms of biological role, is required not only for elongation of protein synthesis but also for the initiation of all mRNA translation through initiator tRNA(fMet) aminoacylation. The chain is Methionine--tRNA ligase from Jannaschia sp. (strain CCS1).